Reading from the N-terminus, the 594-residue chain is MSRQACKKSFSCGSQGFSGHSAVVSGSSRSSCVARSGAASGGACGFRSGAGSLGSHSLYSLGGSKSISISVAAGGSRAGGFSGGRSSCGSGFGSGYGGSLGGSRGMGAGFGGPSGFGGAGGFGRPGSFGPGSCPGGIQEVTINQSLLQPLNVEIDPQIGQVKAQEREQIKTLNNKFASFIDKVRFLEQQNKVLETKWELLQQQTIRSGSGPQNLEPFFESYISCLRKQLDSLLGAKGSLEGELKSMQDLVEDFKKKYEEEINRRTAAENEFVGLKKDVDGAFMNKVELQAKVDSLTDEINFLRTLYDMELSQIQSHVSDTSVVLSMDNNRCLDLDSIIAEVKAQYEDIAQKSKAEAEALYQTKLGELQTTAGRHGDDLRSTKSEIMDLNRMIQRLRAEIENVKKQNTNMQTSIAEAEQRGERALKDADTKFQDLQVALQKAKEDMARLLKEYQELMNVKLALDVEIATYRKLLEGEECRLSGEFQNAVSISVVSNVTSTSSSGSFRGTGGSNYGGDSSGRSGGSSSSSSRGSSSRGSSGSRLGSGGSISVSQQRMGFNSGGSQTSVGSSYKSGRGGSSSVQFSQTTSSSQQRSK.

The tract at residues 1–164 (MSRQACKKSF…DPQIGQVKAQ (164 aa)) is head. Omega-N-methylarginine occurs at positions 85 and 104. The coil 1A stretch occupies residues 165 to 200 (EREQIKTLNNKFASFIDKVRFLEQQNKVLETKWELL). Positions 165–480 (EREQIKTLNN…KLLEGEECRL (316 aa)) constitute an IF rod domain. Residues 201–221 (QQQTIRSGSGPQNLEPFFESY) form a linker 1 region. Residues 222–313 (ISCLRKQLDS…TLYDMELSQI (92 aa)) form a coil 1B region. Residues 314 to 337 (QSHVSDTSVVLSMDNNRCLDLDSI) form a linker 12 region. The tract at residues 338-476 (IAEVKAQYED…ATYRKLLEGE (139 aa)) is coil 2. The tail stretch occupies residues 477-594 (ECRLSGEFQN…TTSSSQQRSK (118 aa)). The interval 497 to 594 (TSTSSSGSFR…TTSSSQQRSK (98 aa)) is disordered. Positions 506–522 (RGTGGSNYGGDSSGRSG) are enriched in gly residues. The segment covering 523–551 (GSSSSSSRGSSSRGSSGSRLGSGGSISVS) has biased composition (low complexity). An Omega-N-methylarginine modification is found at arginine 541. Residues 552–564 (QQRMGFNSGGSQT) are compositionally biased toward polar residues. Residues 565 to 594 (SVGSSYKSGRGGSSSVQFSQTTSSSQQRSK) show a composition bias toward low complexity.

The protein belongs to the intermediate filament family. In terms of assembly, heterotetramer of two type I and two type II keratins.

Functionally, probably contributes to terminal cornification. In Mus musculus (Mouse), this protein is Keratin, type II cytoskeletal 2 oral.